Consider the following 673-residue polypeptide: MSVRRIFVSSALPYANGSIHLGHMVEHIQTDIWVRFQQLRGHECYYVCADDAHGTAIMLHAEKKGVTPEVLLDEVRAEHISDFQGFLINHHHYHTTHSDENRQLTNEIYQTLKSKGYILKKEISQLFDPEKNIFLPDRFIKGICPKCQAKDQYGDNCEVCGSTYAPTDLIQPYSVLSGATPIMKKSEHFFFDLPQFTDFLKDWLQRADLQPAMRHKLAEWFEAGLQPWDISRDAPYWGFTIPEAKDKYFYVWLDAPVGYLGSFQAFCQQHQHVSFDDFWRDDNKTERYHFIGKDIAYFHMLFWPAMLEGAGLQKPTGVFCHGFLTVNGEKMSKSRGTFIKARTYLKHLRPEYLRYYIASKLSAKVEDIDLNLNDFRQKVNSDLVGKLINLASRSAPFLQRFADNTTVSAFSDSALLEQLRGKSETIARDYEQREFGQAVREVMALADAVNAYVDETKPWILAKETGKAAEIAQIASVVLEAFRLLIIYLKPVLPKVAADAEAFLKLSPQSWQDIEKPMINHEIAAFSPMMQRIEEATLNALIQDSREELKAETKAPVQPSAAPEKSEITIDDFAQLDLRIAKVLACEAVEGSDKLLKFQLDVGDLGKRQVFSGIKRFHQPEELVGQLVVYVANLKPRKMRFGVSEGMILSASDDCDLQILLANGRARAGMTIS.

The 'HIGH' region signature appears at 13–23 (PYANGSIHLGH). Cysteine 144, cysteine 147, cysteine 157, and cysteine 160 together coordinate Zn(2+). Positions 330–334 (KMSKS) match the 'KMSKS' region motif. Residue lysine 333 participates in ATP binding. In terms of domain architecture, tRNA-binding spans 572-673 (DFAQLDLRIA…GRARAGMTIS (102 aa)).

The protein belongs to the class-I aminoacyl-tRNA synthetase family. MetG type 1 subfamily. In terms of assembly, homodimer. Zn(2+) is required as a cofactor.

The protein resides in the cytoplasm. The enzyme catalyses tRNA(Met) + L-methionine + ATP = L-methionyl-tRNA(Met) + AMP + diphosphate. Functionally, is required not only for elongation of protein synthesis but also for the initiation of all mRNA translation through initiator tRNA(fMet) aminoacylation. This Dichelobacter nodosus (strain VCS1703A) protein is Methionine--tRNA ligase.